The chain runs to 416 residues: Phosphoglycerate kinase 2 (416 aa).

Residues 28–30, R44, 65–68, R122, and R162 each bind substrate; these read DMN and HQSR. Residues E337 and 362–365 each bind ATP; that span reads GGHI.

This sequence belongs to the phosphoglycerate kinase family. As to quaternary structure, monomer.

Its subcellular location is the cytoplasm. It catalyses the reaction (2R)-3-phosphoglycerate + ATP = (2R)-3-phospho-glyceroyl phosphate + ADP. Its pathway is carbohydrate degradation; glycolysis; pyruvate from D-glyceraldehyde 3-phosphate: step 2/5. The polypeptide is Phosphoglycerate kinase 2 (Methanosarcina acetivorans (strain ATCC 35395 / DSM 2834 / JCM 12185 / C2A)).